Consider the following 523-residue polypeptide: GMP synthase [glutamine-hydrolyzing] (523 aa).

In terms of domain architecture, Glutamine amidotransferase type-1 spans 8-205; that stretch reads KILILDFGSQ…VVNICGCATN (198 aa). Catalysis depends on Cys85, which acts as the Nucleophile. Catalysis depends on residues His179 and Glu181. The GMPS ATP-PPase domain maps to 206–398; sequence WTPENIIEDA…LGLPAEMLNR (193 aa). 233 to 239 is a binding site for ATP; sequence SGGVDSS.

In terms of assembly, homodimer.

It carries out the reaction XMP + L-glutamine + ATP + H2O = GMP + L-glutamate + AMP + diphosphate + 2 H(+). Its pathway is purine metabolism; GMP biosynthesis; GMP from XMP (L-Gln route): step 1/1. Functionally, catalyzes the synthesis of GMP from XMP. This is GMP synthase [glutamine-hydrolyzing] from Actinobacillus succinogenes (strain ATCC 55618 / DSM 22257 / CCUG 43843 / 130Z).